The sequence spans 577 residues: Isocitrate dehydrogenase kinase/phosphatase (577 aa).

ATP-binding positions include 324-330 (APGIRGL) and K345. Residue D380 is part of the active site.

This sequence belongs to the AceK family.

It is found in the cytoplasm. It catalyses the reaction L-seryl-[isocitrate dehydrogenase] + ATP = O-phospho-L-seryl-[isocitrate dehydrogenase] + ADP + H(+). Functionally, bifunctional enzyme which can phosphorylate or dephosphorylate isocitrate dehydrogenase (IDH) on a specific serine residue. This is a regulatory mechanism which enables bacteria to bypass the Krebs cycle via the glyoxylate shunt in response to the source of carbon. When bacteria are grown on glucose, IDH is fully active and unphosphorylated, but when grown on acetate or ethanol, the activity of IDH declines drastically concomitant with its phosphorylation. In Pseudoalteromonas atlantica (strain T6c / ATCC BAA-1087), this protein is Isocitrate dehydrogenase kinase/phosphatase.